The primary structure comprises 349 residues: Short-wave-sensitive opsin 1 (349 aa).

At 1–34 (MSKMSEEEEFLLFKNISLVGPWDGPQYHLAPVWA) the chain is on the extracellular side. Residue asparagine 15 is glycosylated (N-linked (GlcNAc...) asparagine). A helical membrane pass occupies residues 35–59 (FHLQAVFMGFVFFVGTPLNATVLVA). At 60 to 71 (TLRYRKLRQPLN) the chain is on the cytoplasmic side. Residues 72 to 97 (YILVNVSLGGFIYCIFSVFIVFITSC) form a helical membrane-spanning segment. The Extracellular portion of the chain corresponds to 98 to 111 (YGYFVFGRHVCALE). The cysteines at positions 108 and 185 are disulfide-linked. Residues 112–131 (AFLGCTAGLVTGWSLAFLAF) form a helical membrane-spanning segment. At 132-150 (ERYIIICKPFGNFRFSSKH) the chain is on the cytoplasmic side. The helical transmembrane segment at 151-174 (ALMVVVATWTIGIGVSIPPFFGWS) threads the bilayer. Topologically, residues 175-200 (RFVPEGLQCSCGPDWYTVGTKYYSEY) are extracellular. The chain crosses the membrane as a helical span at residues 201–228 (YTWFLFIFCYIVPLSLICFSYSQLLGAL). Residues 229-250 (RAVAAQQQESASTQKAEREVSH) lie on the Cytoplasmic side of the membrane. Residues 251–274 (MVVVMVGSFCLCYTPYAALAMYIV) form a helical membrane-spanning segment. Over 275 to 282 (NNRNHGVD) the chain is Extracellular. A helical transmembrane segment spans residues 283-307 (LRLVTIPAFFSKSACVYNPIIYCFM). Residue lysine 294 is modified to N6-(retinylidene)lysine. Residues 308–349 (NKQFRACIMEMVCGKPMTDESELSSSQKTEVSTVSSSQVGPN) lie on the Cytoplasmic side of the membrane. Residues 327–349 (ESELSSSQKTEVSTVSSSQVGPN) are disordered. Residues 330–349 (LSSSQKTEVSTVSSSQVGPN) show a composition bias toward polar residues.

The protein belongs to the G-protein coupled receptor 1 family. Opsin subfamily. Phosphorylated on some or all of the serine and threonine residues present in the C-terminal region.

It localises to the cell membrane. The protein resides in the photoreceptor inner segment. The protein localises to the cell projection. Its subcellular location is the cilium. It is found in the photoreceptor outer segment. It localises to the cytoplasm. The protein resides in the perinuclear region. Functionally, visual pigments are the light-absorbing molecules that mediate vision. They consist of an apoprotein, opsin, covalently linked to cis-retinal. Required for the maintenance of cone outer segment organization in the ventral retina, but not essential for the maintenance of functioning cone photoreceptors. Involved in ensuring correct abundance and localization of retinal membrane proteins. May increase spectral sensitivity in dim light. The polypeptide is Short-wave-sensitive opsin 1 (OPN1SW) (Bos taurus (Bovine)).